We begin with the raw amino-acid sequence, 49 residues long: U6-myrmicitoxin-Mri1a (49 aa).

Positions 1 to 27 are cleaved as a signal peptide; the sequence is MNPKALCSFLLATFLLLTVTIMPSVHA. The propeptide occupies 28–35; sequence NAEANADA.

Post-translationally, contains 1 disulfide bond. Expressed by the venom gland.

The protein localises to the secreted. This is U6-myrmicitoxin-Mri1a from Manica rubida (European giant red ant).